The sequence spans 108 residues: UPF0102 protein Sfri_0388 (108 aa).

Belongs to the UPF0102 family.

This Shewanella frigidimarina (strain NCIMB 400) protein is UPF0102 protein Sfri_0388.